We begin with the raw amino-acid sequence, 433 residues long: Serine--tRNA ligase (433 aa).

235–237 is a binding site for L-serine; the sequence is TSE. Residue 266-268 participates in ATP binding; that stretch reads RSE. L-serine is bound at residue Glu-289. 353–356 is an ATP binding site; the sequence is EISS. Ser-388 provides a ligand contact to L-serine.

This sequence belongs to the class-II aminoacyl-tRNA synthetase family. Type-1 seryl-tRNA synthetase subfamily. In terms of assembly, homodimer. The tRNA molecule binds across the dimer.

It localises to the cytoplasm. The catalysed reaction is tRNA(Ser) + L-serine + ATP = L-seryl-tRNA(Ser) + AMP + diphosphate + H(+). It catalyses the reaction tRNA(Sec) + L-serine + ATP = L-seryl-tRNA(Sec) + AMP + diphosphate + H(+). It participates in aminoacyl-tRNA biosynthesis; selenocysteinyl-tRNA(Sec) biosynthesis; L-seryl-tRNA(Sec) from L-serine and tRNA(Sec): step 1/1. In terms of biological role, catalyzes the attachment of serine to tRNA(Ser). Is also able to aminoacylate tRNA(Sec) with serine, to form the misacylated tRNA L-seryl-tRNA(Sec), which will be further converted into selenocysteinyl-tRNA(Sec). The sequence is that of Serine--tRNA ligase from Burkholderia lata (strain ATCC 17760 / DSM 23089 / LMG 22485 / NCIMB 9086 / R18194 / 383).